Consider the following 508-residue polypeptide: Anthranilate synthase component 1 (508 aa).

Residues S49 and 282 to 284 (PYM) each bind L-tryptophan. 317–318 (GT) is a chorismate binding site. E344 contacts Mg(2+). Residues Y432, R452, 466-468 (GAG), and G468 each bind chorismate. E481 is a binding site for Mg(2+).

It belongs to the anthranilate synthase component I family. Heterotetramer consisting of two non-identical subunits: a beta subunit (TrpG) and a large alpha subunit (TrpE). Mg(2+) serves as cofactor.

The enzyme catalyses chorismate + L-glutamine = anthranilate + pyruvate + L-glutamate + H(+). The protein operates within amino-acid biosynthesis; L-tryptophan biosynthesis; L-tryptophan from chorismate: step 1/5. Feedback inhibited by tryptophan. Its function is as follows. Part of a heterotetrameric complex that catalyzes the two-step biosynthesis of anthranilate, an intermediate in the biosynthesis of L-tryptophan. In the first step, the glutamine-binding beta subunit (TrpG) of anthranilate synthase (AS) provides the glutamine amidotransferase activity which generates ammonia as a substrate that, along with chorismate, is used in the second step, catalyzed by the large alpha subunit of AS (TrpE) to produce anthranilate. In the absence of TrpG, TrpE can synthesize anthranilate directly from chorismate and high concentrations of ammonia. The polypeptide is Anthranilate synthase component 1 (trpE) (Geobacillus stearothermophilus (Bacillus stearothermophilus)).